Reading from the N-terminus, the 152-residue chain is FMN reductase (NADH) RutF (152 aa).

The protein belongs to the non-flavoprotein flavin reductase family. RutF subfamily.

It catalyses the reaction FMNH2 + NAD(+) = FMN + NADH + 2 H(+). Its function is as follows. Catalyzes the reduction of FMN to FMNH2 which is used to reduce pyrimidine by RutA via the Rut pathway. The sequence is that of FMN reductase (NADH) RutF from Shigella dysenteriae serotype 1 (strain Sd197).